The primary structure comprises 209 residues: Ribonuclease HII (209 aa).

The RNase H type-2 domain maps to 19 to 209; sequence CIIVGVDEVG…LPGITKLYSK (191 aa). The a divalent metal cation site is built by aspartate 25, glutamate 26, and aspartate 118.

It belongs to the RNase HII family. It depends on Mn(2+) as a cofactor. Mg(2+) serves as cofactor.

It is found in the cytoplasm. The enzyme catalyses Endonucleolytic cleavage to 5'-phosphomonoester.. In terms of biological role, endonuclease that specifically degrades the RNA of RNA-DNA hybrids. This chain is Ribonuclease HII, found in Ehrlichia canis (strain Jake).